The following is a 531-amino-acid chain: Chaperonin GroEL 2 (531 aa).

ATP-binding positions include 30–33, 87–91, glycine 414, and aspartate 494; these read TLGP and DGTTT.

The protein belongs to the chaperonin (HSP60) family. Forms a cylinder of 14 subunits composed of two heptameric rings stacked back-to-back. Interacts with the co-chaperonin GroES.

It is found in the cytoplasm. It catalyses the reaction ATP + H2O + a folded polypeptide = ADP + phosphate + an unfolded polypeptide.. Functionally, together with its co-chaperonin GroES, plays an essential role in assisting protein folding. The GroEL-GroES system forms a nano-cage that allows encapsulation of the non-native substrate proteins and provides a physical environment optimized to promote and accelerate protein folding. This is Chaperonin GroEL 2 from Cutibacterium acnes (strain DSM 16379 / KPA171202) (Propionibacterium acnes).